We begin with the raw amino-acid sequence, 106 residues long: uncharacterized protein (106 aa).

Residues M1 to P6 are Cytoplasmic-facing. Residues L7–P27 traverse the membrane as a helical segment. The Extracellular portion of the chain corresponds to Y28–S32. A helical membrane pass occupies residues L33 to S53. The Cytoplasmic portion of the chain corresponds to Q54–K73. Residues F74–F94 traverse the membrane as a helical segment. The Extracellular segment spans residues Y95–K106.

Its subcellular location is the membrane. This is an uncharacterized protein from Saccharomyces cerevisiae (strain ATCC 204508 / S288c) (Baker's yeast).